Consider the following 408-residue polypeptide: LL-diaminopimelate aminotransferase (408 aa).

Residues Y15 and G42 each contribute to the substrate site. Pyridoxal 5'-phosphate-binding positions include Y72, 108 to 109 (SK), Y132, N187, Y218, and 246 to 248 (SFS). 3 residues coordinate substrate: K109, Y132, and N187. The residue at position 249 (K249) is an N6-(pyridoxal phosphate)lysine. Pyridoxal 5'-phosphate is bound by residues R257 and N292. Substrate-binding residues include N292 and R388.

Belongs to the class-I pyridoxal-phosphate-dependent aminotransferase family. LL-diaminopimelate aminotransferase subfamily. Homodimer. It depends on pyridoxal 5'-phosphate as a cofactor.

It carries out the reaction (2S,6S)-2,6-diaminopimelate + 2-oxoglutarate = (S)-2,3,4,5-tetrahydrodipicolinate + L-glutamate + H2O + H(+). It participates in amino-acid biosynthesis; L-lysine biosynthesis via DAP pathway; LL-2,6-diaminopimelate from (S)-tetrahydrodipicolinate (aminotransferase route): step 1/1. Functionally, involved in the synthesis of meso-diaminopimelate (m-DAP or DL-DAP), required for both lysine and peptidoglycan biosynthesis. Catalyzes the direct conversion of tetrahydrodipicolinate to LL-diaminopimelate. This is LL-diaminopimelate aminotransferase from Synechococcus sp. (strain CC9902).